Consider the following 387-residue polypeptide: O-methyltransferase fsr2 (387 aa).

Aspartate 231 contributes to the S-adenosyl-L-methionine binding site. The active-site Proton acceptor is histidine 280.

Belongs to the class I-like SAM-binding methyltransferase superfamily. Cation-independent O-methyltransferase family. COMT subfamily.

Its pathway is polyketide biosynthesis. Functionally, O-methyltransferase; part of the gene cluster that mediates the biosynthesis of fusarubins, highly pigmented naphthoquinones responsible for the coloration of the fruiting bodies. The non-reducing polyketide synthase FSR1 is responsible for the condensation of seven acetyl-CoA units to yield a haptaketide. After rings A and B are formed by aldol-type cyclization, the PKS-derived product is released as 6-O-demethylfusarubinaldehyde. Then, two hydroxyl groups at C-5 and C-10 are incorporated by FSR3, and simultaneously hydroxyl groups at C-6 and C-8 are methylated by FSR2. The aldehyde is, on the one hand, reduced by FSR3 to 8-O-methylfusarubin alcohol, which equilibrates mainly with 8-O-methylfusarubin and only small amounts of 8-O-methylnectriafurone. On the other hand, the aldehyde can be oxidized to form 8-O-methylfusarubinic acid, a reaction driven by FSR3 equilibrating with 8-O-methylfusarubinlactone, finally resulting in 8-O-methylanhydrofusarubinlactol after a further reduction step and loss of water. 8-O-Methylfusarubinic acid can also undergo decarboxylation, resulting in 8-O-methyl-13-hydroxynorjavanicin after another hydroxylation step at C-13. Both steps are most likely also accomplished by FSR3. No enzymatic function has been determined so far for either FSR4 and FSR5. Their deletion does not alter the product spectrum, but the possibility that they catalyze specific enzymatic steps during perithecium development cannot be ruled out. FSR4 might possess a regulatory function in the biosynthesis of fusarubins. The sequence is that of O-methyltransferase fsr2 from Gibberella fujikuroi (strain CBS 195.34 / IMI 58289 / NRRL A-6831) (Bakanae and foot rot disease fungus).